Here is a 1551-residue protein sequence, read N- to C-terminus: UDP-glucose:glycoprotein glucosyltransferase 1 (1551 aa).

A signal peptide spans 1 to 42; sequence MCSRGDANTADAAAARRVTGLRYNMRLLIALALPCLFSLAEA. N-linked (GlcNAc...) asparagine glycans are attached at residues N269, N536, and N1228. The glucosyltransferase stretch occupies residues 1244 to 1551; the sequence is KAEEVKQDKD…QEGSQKHEEL (308 aa). S1277 is subject to Phosphoserine. The segment at 1531–1551 is disordered; it reads KELGTLHTEETQEGSQKHEEL. Positions 1548–1551 match the Prevents secretion from ER motif; the sequence is HEEL.

Belongs to the glycosyltransferase 8 family. In terms of assembly, monomer as well as in a tight complex with SELENOF. Interacts with METTL23. Part of a large chaperone multiprotein complex comprising DNAJB11, HSP90B1, HSPA5, HYOU, PDIA2, PDIA4, PDIA6, PPIB, SDF2L1, UGGT1 and very small amounts of ERP29, but not, or at very low levels, CALR nor CANX. Ca(2+) is required as a cofactor. The cofactor is Mn(2+).

The protein localises to the endoplasmic reticulum lumen. It localises to the endoplasmic reticulum-Golgi intermediate compartment. It carries out the reaction N(4)-(alpha-D-Man-(1-&gt;2)-alpha-D-Man-(1-&gt;2)-alpha-D-Man-(1-&gt;3)-[alpha-D-Man-(1-&gt;2)-alpha-D-Man-(1-&gt;3)-[alpha-D-Man-(1-&gt;2)-alpha-D-Man-(1-&gt;6)]-alpha-D-Man-(1-&gt;6)]-beta-D-Man-(1-&gt;4)-beta-D-GlcNAc-(1-&gt;4)-beta-D-GlcNAc)-L-asparaginyl-[protein] (N-glucan mannose isomer 9A1,2,3B1,2,3) + UDP-alpha-D-glucose = N(4)-(alpha-D-Glc-(1-&gt;3)-alpha-D-Man-(1-&gt;2)-alpha-D-Man-(1-&gt;2)-alpha-D-Man-(1-&gt;3)-[alpha-D-Man-(1-&gt;2)-alpha-D-Man-(1-&gt;3)-[alpha-D-Man-(1-&gt;2)-alpha-D-Man-(1-&gt;6)]-alpha-D-Man-(1-&gt;6)]-beta-D-Man-(1-&gt;4)-beta-D-GlcNAc-(1-&gt;4)-beta-D-GlcNAc)-L-asparaginyl-[protein] + UDP + H(+). It functions in the pathway protein modification; protein glycosylation. Its function is as follows. Recognizes glycoproteins with minor folding defects. Reglucosylates single N-glycans near the misfolded part of the protein, thus providing quality control for protein folding in the endoplasmic reticulum. Reglucosylated proteins are recognized by calreticulin for recycling to the endoplasmic reticulum and refolding or degradation. In Mus musculus (Mouse), this protein is UDP-glucose:glycoprotein glucosyltransferase 1 (Uggt1).